The chain runs to 122 residues: Mth938 domain-containing protein (122 aa).

The tract at residues 6-122 (IASLSWGQMK…RVGGVFHSTC (117 aa)) is MTH138-like domain.

Belongs to the AAMDC family.

Its subcellular location is the cytoplasm. Functionally, may play a role in preadipocyte differentiation and adipogenesis. This chain is Mth938 domain-containing protein (AAMDC), found in Bos taurus (Bovine).